We begin with the raw amino-acid sequence, 439 residues long: Tol-Pal system protein TolB (439 aa).

An N-terminal signal peptide occupies residues 1-22 (MKKPLRWLAALTVLLLPLSALA).

It belongs to the TolB family. As to quaternary structure, the Tol-Pal system is composed of five core proteins: the inner membrane proteins TolA, TolQ and TolR, the periplasmic protein TolB and the outer membrane protein Pal. They form a network linking the inner and outer membranes and the peptidoglycan layer.

It localises to the periplasm. In terms of biological role, part of the Tol-Pal system, which plays a role in outer membrane invagination during cell division and is important for maintaining outer membrane integrity. The chain is Tol-Pal system protein TolB from Xanthomonas oryzae pv. oryzae (strain PXO99A).